The chain runs to 184 residues: Dual-action ribosomal maturation protein DarP (184 aa).

A disordered region spans residues 1–21 (MYKHPDEEWLDEIPGQQENED).

It belongs to the DarP family.

The protein localises to the cytoplasm. Its function is as follows. Member of a network of 50S ribosomal subunit biogenesis factors which assembles along the 30S-50S interface, preventing incorrect 23S rRNA structures from forming. Promotes peptidyl transferase center (PTC) maturation. The polypeptide is Dual-action ribosomal maturation protein DarP (Edwardsiella ictaluri (strain 93-146)).